Consider the following 202-residue polypeptide: uncharacterized protein (202 aa).

It belongs to the NAD(P)H dehydrogenase (quinone) family.

This is an uncharacterized protein from Haemophilus influenzae (strain ATCC 51907 / DSM 11121 / KW20 / Rd).